Here is a 471-residue protein sequence, read N- to C-terminus: Collagenase 3 (471 aa).

The signal sequence occupies residues 1–19 (MHPGVLAAFLFLSWTHCRA). Positions 20 to 103 (LPLPSGGDED…PRCGVPDVGE (84 aa)) are cleaved as a propeptide — activation peptide. A Cysteine switch motif is present at residues 94-101 (PRCGVPDV). Cys96 lines the Zn(2+) pocket. Asn117 carries an N-linked (GlcNAc...) asparagine glycan. Position 128 (Asp128) interacts with Ca(2+). An N-linked (GlcNAc...) asparagine glycan is attached at Asn152. Asp162 contributes to the Ca(2+) binding site. Zn(2+) is bound by residues His172 and Asp174. Residues 176 to 246 (YPFDGPSGLL…GALMFPIYTY (71 aa)) are interaction with TIMP2. Ca(2+) contacts are provided by Asp179, Gly180, Ser182, and Leu184. His187 is a Zn(2+) binding site. 3 residues coordinate Ca(2+): Asn194, Gly196, and Asp198. His200 provides a ligand contact to Zn(2+). Residues Asp202, Asp203, and Glu205 each contribute to the Ca(2+) site. His222 is a binding site for Zn(2+). Glu223 is a catalytic residue. Positions 226, 232, and 240 each coordinate Zn(2+). Residues 263-284 (QSLYGPGDEDPNPKHPKTPDKC) form a disordered region. Residues 268–471 (PGDEDPNPKH…VMPANSILWC (204 aa)) are interaction with collagen. Positions 273 to 284 (PNPKHPKTPDKC) are enriched in basic and acidic residues. Hemopexin repeat units follow at residues 281–330 (PDKC…WPEL), 331–377 (PNRI…GLPK), 379–427 (VKKI…FPGI), and 428–471 (GDKV…ILWC). The cysteines at positions 284 and 471 are disulfide-linked. Positions 291, 293, 335, and 337 each coordinate Ca(2+). Phosphotyrosine; by PKDCC is present on Tyr366. Ca(2+) is bound by residues Ser383, Ala385, Asp432, and Val434.

It belongs to the peptidase M10A family. As to quaternary structure, monomer. Interacts with TIMP1, TIMP2 and TIMP3. Binds (via the C-terminal region) to collagen. It depends on Ca(2+) as a cofactor. Requires Zn(2+) as cofactor. Post-translationally, the proenzyme is activated by removal of the propeptide; this cleavage can be effected by other matrix metalloproteinases, such as MMP2, MMP3 and MMP14 and may involve several cleavage steps. Cleavage can also be autocatalytic, after partial maturation by another protease or after treatment with 4-aminophenylmercuric acetate (APMA) (in vitro). N-glycosylated. In terms of processing, tyrosine phosphorylated by PKDCC/VLK. Detected in fetal cartilage and calvaria, in chondrocytes of hypertrophic cartilage in vertebrae and in the dorsal end of ribs undergoing ossification, as well as in osteoblasts and periosteal cells below the inner periosteal region of ossified ribs. Detected in chondrocytes from in joint cartilage that have been treated with TNF and IL1B, but not in untreated chondrocytes. Detected in T lymphocytes. Detected in breast carcinoma tissue.

Its subcellular location is the secreted. It is found in the extracellular space. The protein resides in the extracellular matrix. Inhibited by TIMP1, TIMP2 and TIMP3. Inhibited by acetohydroxamic acid and other zinc chelators. In terms of biological role, plays a role in the degradation of extracellular matrix proteins including fibrillar collagen, fibronectin, TNC and ACAN. Cleaves triple helical collagens, including type I, type II and type III collagen, but has the highest activity with soluble type II collagen. Can also degrade collagen type IV, type XIV and type X. May also function by activating or degrading key regulatory proteins, such as TGFB1 and CCN2. Plays a role in wound healing, tissue remodeling, cartilage degradation, bone development, bone mineralization and ossification. Required for normal embryonic bone development and ossification. Plays a role in the healing of bone fractures via endochondral ossification. Plays a role in wound healing, probably by a mechanism that involves proteolytic activation of TGFB1 and degradation of CCN2. Plays a role in keratinocyte migration during wound healing. May play a role in cell migration and in tumor cell invasion. The protein is Collagenase 3 (MMP13) of Homo sapiens (Human).